Consider the following 287-residue polypeptide: NAD kinase (287 aa).

The active-site Proton acceptor is the D66. Residues 66–67 (DG), 137–138 (ND), R148, R165, D167, and 178–183 (TAYSMS) contribute to the NAD(+) site.

Belongs to the NAD kinase family. A divalent metal cation is required as a cofactor.

The protein resides in the cytoplasm. The catalysed reaction is NAD(+) + ATP = ADP + NADP(+) + H(+). In terms of biological role, involved in the regulation of the intracellular balance of NAD and NADP, and is a key enzyme in the biosynthesis of NADP. Catalyzes specifically the phosphorylation on 2'-hydroxyl of the adenosine moiety of NAD to yield NADP. The protein is NAD kinase of Chlorobium limicola (strain DSM 245 / NBRC 103803 / 6330).